A 484-amino-acid polypeptide reads, in one-letter code: Major extracellular endoglucanase (484 aa).

A signal peptide spans 1 to 25; it reads MSIFRTASTLALATALALAAGPAFS. The active-site Proton donor is Glu-182. The active-site Nucleophile is Glu-303. Residues 370-402 form a disordered region; it reads GTAGNTTPTPTPTPTPTPTPTPTPTPTPTPGTS. The segment at 375-399 is thr-Pro repeats ('hinge') (Pro-Thr box); sequence TTPTPTPTPTPTPTPTPTPTPTPTP. The segment covering 378-398 has biased composition (pro residues); sequence TPTPTPTPTPTPTPTPTPTPT. The region spanning 395 to 484 is the CBM2 domain; the sequence is PTPTPGTSTF…TAEFGFCAAS (90 aa).

This sequence belongs to the glycosyl hydrolase 5 (cellulase A) family.

The catalysed reaction is Endohydrolysis of (1-&gt;4)-beta-D-glucosidic linkages in cellulose, lichenin and cereal beta-D-glucans.. In Xanthomonas campestris pv. campestris (strain ATCC 33913 / DSM 3586 / NCPPB 528 / LMG 568 / P 25), this protein is Major extracellular endoglucanase (engXCA).